Reading from the N-terminus, the 426-residue chain is Histidinol dehydrogenase (426 aa).

The NAD(+) site is built by Tyr130, Gln187, and Asn210. Residues Ser233, Gln255, and His258 each coordinate substrate. Zn(2+) contacts are provided by Gln255 and His258. Residues Glu323 and His324 each act as proton acceptor in the active site. His324, Asp357, Glu411, and His416 together coordinate substrate. Asp357 contributes to the Zn(2+) binding site. His416 serves as a coordination point for Zn(2+).

It belongs to the histidinol dehydrogenase family. The cofactor is Zn(2+).

It catalyses the reaction L-histidinol + 2 NAD(+) + H2O = L-histidine + 2 NADH + 3 H(+). Its pathway is amino-acid biosynthesis; L-histidine biosynthesis; L-histidine from 5-phospho-alpha-D-ribose 1-diphosphate: step 9/9. Catalyzes the sequential NAD-dependent oxidations of L-histidinol to L-histidinaldehyde and then to L-histidine. The polypeptide is Histidinol dehydrogenase (hisD) (Aquifex aeolicus (strain VF5)).